Here is a 514-residue protein sequence, read N- to C-terminus: Probable lysine--tRNA ligase, cytoplasmic (514 aa).

It belongs to the class-II aminoacyl-tRNA synthetase family. As to quaternary structure, homodimer.

The protein localises to the cytoplasm. The catalysed reaction is tRNA(Lys) + L-lysine + ATP = L-lysyl-tRNA(Lys) + AMP + diphosphate. The protein is Probable lysine--tRNA ligase, cytoplasmic of Vairimorpha ceranae (strain BRL01) (Microsporidian parasite).